We begin with the raw amino-acid sequence, 321 residues long: Coproporphyrin III ferrochelatase (321 aa).

Positions 185 and 267 each coordinate Fe(2+).

Belongs to the ferrochelatase family.

It localises to the cytoplasm. It carries out the reaction Fe-coproporphyrin III + 2 H(+) = coproporphyrin III + Fe(2+). It functions in the pathway porphyrin-containing compound metabolism; protoheme biosynthesis. In terms of biological role, involved in coproporphyrin-dependent heme b biosynthesis. Catalyzes the insertion of ferrous iron into coproporphyrin III to form Fe-coproporphyrin III. The polypeptide is Coproporphyrin III ferrochelatase (Lacticaseibacillus paracasei (strain ATCC 334 / BCRC 17002 / CCUG 31169 / CIP 107868 / KCTC 3260 / NRRL B-441) (Lactobacillus paracasei)).